The primary structure comprises 156 residues: MSINATLLGQAISFLLFVWFCMKFVWPPLMNAIEERQKKIADGLADAGRAAKDLELAQVKATEQLKDAKATANEIIEQANKRKAQIVDEAKVEADTERAKIIAQGHAEIENERNRVKEDLRKQVAILAIAGAEKILERSIDEAAHSDIVNKLVAEL.

A helical transmembrane segment spans residues 7-29; the sequence is LLGQAISFLLFVWFCMKFVWPPL.

This sequence belongs to the ATPase B chain family. F-type ATPases have 2 components, F(1) - the catalytic core - and F(0) - the membrane proton channel. F(1) has five subunits: alpha(3), beta(3), gamma(1), delta(1), epsilon(1). F(0) has three main subunits: a(1), b(2) and c(10-14). The alpha and beta chains form an alternating ring which encloses part of the gamma chain. F(1) is attached to F(0) by a central stalk formed by the gamma and epsilon chains, while a peripheral stalk is formed by the delta and b chains.

The protein resides in the cell inner membrane. In terms of biological role, f(1)F(0) ATP synthase produces ATP from ADP in the presence of a proton or sodium gradient. F-type ATPases consist of two structural domains, F(1) containing the extramembraneous catalytic core and F(0) containing the membrane proton channel, linked together by a central stalk and a peripheral stalk. During catalysis, ATP synthesis in the catalytic domain of F(1) is coupled via a rotary mechanism of the central stalk subunits to proton translocation. Its function is as follows. Component of the F(0) channel, it forms part of the peripheral stalk, linking F(1) to F(0). The chain is ATP synthase subunit b from Shewanella pealeana (strain ATCC 700345 / ANG-SQ1).